Consider the following 940-residue polypeptide: Insulin receptor substrate 1 (940 aa).

The 102-residue stretch at 8 to 109 folds into the PH domain; sequence GMVLSGYHKK…WLDKLLLLQR (102 aa). Positions 122–236 constitute an IRS-type PTB domain; sequence YEHVWQVIIQ…SAMSAKTDSN (115 aa). Phosphoserine occurs at positions 284, 285, and 340. Position 407 is a phosphotyrosine; by INSR (Tyr407). Positions 407 to 410 match the YXXM motif 1 motif; sequence YIPM. Residues 523–540 show a composition bias toward polar residues; that stretch reads NRSQNNISKEGPISGTST. The disordered stretch occupies residues 523–549; sequence NRSQNNISKEGPISGTSTNREKKSTSA. Ser548 is modified (phosphoserine). Positions 639–642 match the YXXM motif 2 motif; that stretch reads YLEM. Tyr883 carries the post-translational modification Phosphotyrosine; by INSR. Positions 895 to 915 are disordered; that stretch reads NPAKYLKRGSRESPPVATCAE. 2 positions are modified to phosphoserine: Ser904 and Ser907. Tyr920 is modified (phosphotyrosine; by INSR).

In terms of assembly, bindings to phosphatidylinositol 3-kinase and SHP2.

Its function is as follows. Activates phosphatidylinositol 3-kinase when bound to the regulatory p85 subunit. May mediate the control of various cellular processes by insulin-like peptides. When phosphorylated by the insulin receptor binds specifically to various cellular proteins containing SH2 domains. Involved in control of cell proliferation, cell size, and body and organ growth throughout development. Also has a role in a signaling pathway controlling the physiological response required to endure periods of low nutrient conditions. Insulin/insulin-like growth factor (IGF) signaling pathway has a role in regulating aging and is necessary in the ovary for vitellogenic maturation. The sequence is that of Insulin receptor substrate 1 from Drosophila ananassae (Fruit fly).